We begin with the raw amino-acid sequence, 74 residues long: Protein SlyX homolog (74 aa).

Belongs to the SlyX family.

The sequence is that of Protein SlyX homolog from Aliivibrio fischeri (strain ATCC 700601 / ES114) (Vibrio fischeri).